The following is a 315-amino-acid chain: 4-hydroxy-3-methylbut-2-enyl diphosphate reductase (315 aa).

C12 is a [4Fe-4S] cluster binding site. Residues H41 and H74 each coordinate (2E)-4-hydroxy-3-methylbut-2-enyl diphosphate. Dimethylallyl diphosphate contacts are provided by H41 and H74. Isopentenyl diphosphate is bound by residues H41 and H74. A [4Fe-4S] cluster-binding site is contributed by C96. H124 serves as a coordination point for (2E)-4-hydroxy-3-methylbut-2-enyl diphosphate. H124 provides a ligand contact to dimethylallyl diphosphate. H124 serves as a coordination point for isopentenyl diphosphate. The Proton donor role is filled by E126. A (2E)-4-hydroxy-3-methylbut-2-enyl diphosphate-binding site is contributed by T168. C198 contacts [4Fe-4S] cluster. (2E)-4-hydroxy-3-methylbut-2-enyl diphosphate-binding residues include S226, S227, N228, and S270. Dimethylallyl diphosphate is bound by residues S226, S227, N228, and S270. Isopentenyl diphosphate is bound by residues S226, S227, N228, and S270.

Belongs to the IspH family. It depends on [4Fe-4S] cluster as a cofactor.

It carries out the reaction isopentenyl diphosphate + 2 oxidized [2Fe-2S]-[ferredoxin] + H2O = (2E)-4-hydroxy-3-methylbut-2-enyl diphosphate + 2 reduced [2Fe-2S]-[ferredoxin] + 2 H(+). The catalysed reaction is dimethylallyl diphosphate + 2 oxidized [2Fe-2S]-[ferredoxin] + H2O = (2E)-4-hydroxy-3-methylbut-2-enyl diphosphate + 2 reduced [2Fe-2S]-[ferredoxin] + 2 H(+). The protein operates within isoprenoid biosynthesis; dimethylallyl diphosphate biosynthesis; dimethylallyl diphosphate from (2E)-4-hydroxy-3-methylbutenyl diphosphate: step 1/1. It functions in the pathway isoprenoid biosynthesis; isopentenyl diphosphate biosynthesis via DXP pathway; isopentenyl diphosphate from 1-deoxy-D-xylulose 5-phosphate: step 6/6. In terms of biological role, catalyzes the conversion of 1-hydroxy-2-methyl-2-(E)-butenyl 4-diphosphate (HMBPP) into a mixture of isopentenyl diphosphate (IPP) and dimethylallyl diphosphate (DMAPP). Acts in the terminal step of the DOXP/MEP pathway for isoprenoid precursor biosynthesis. The sequence is that of 4-hydroxy-3-methylbut-2-enyl diphosphate reductase from Pseudomonas fluorescens (strain SBW25).